We begin with the raw amino-acid sequence, 335 residues long: Dihydroorotate dehydrogenase (quinone) (335 aa).

Residues 59 to 63 (AGADK) and Thr-83 contribute to the FMN site. Substrate is bound at residue Lys-63. 108 to 112 (NRNGF) lines the substrate pocket. Asn-136 and Asn-169 together coordinate FMN. Asn-169 provides a ligand contact to substrate. Catalysis depends on Ser-172, which acts as the Nucleophile. Asn-174 provides a ligand contact to substrate. FMN is bound by residues Lys-214 and Gly-242. 243–244 (NT) contributes to the substrate binding site. Residues Gly-265, Gly-294, and 315 to 316 (YS) each bind FMN.

The protein belongs to the dihydroorotate dehydrogenase family. Type 2 subfamily. In terms of assembly, monomer. It depends on FMN as a cofactor.

The protein localises to the cell membrane. It catalyses the reaction (S)-dihydroorotate + a quinone = orotate + a quinol. The protein operates within pyrimidine metabolism; UMP biosynthesis via de novo pathway; orotate from (S)-dihydroorotate (quinone route): step 1/1. Catalyzes the conversion of dihydroorotate to orotate with quinone as electron acceptor. The sequence is that of Dihydroorotate dehydrogenase (quinone) from Glaesserella parasuis serovar 5 (strain SH0165) (Haemophilus parasuis).